The sequence spans 516 residues: Endoglucanase 17 (516 aa).

Residues 1–29 form the signal peptide; the sequence is MALLLVSSSSSYALRVTIFLSFFFFLCNG. Aspartate 105 functions as the Nucleophile in the catalytic mechanism. Active-site residues include histidine 433, aspartate 484, and glutamate 493.

It belongs to the glycosyl hydrolase 9 (cellulase E) family.

It localises to the secreted. The enzyme catalyses Endohydrolysis of (1-&gt;4)-beta-D-glucosidic linkages in cellulose, lichenin and cereal beta-D-glucans.. The sequence is that of Endoglucanase 17 from Arabidopsis thaliana (Mouse-ear cress).